The sequence spans 227 residues: Esterase OVCA2 (227 aa).

Active-site charge relay system residues include Ser-120, Asp-180, and His-207.

It belongs to the LovG family.

The catalysed reaction is a carboxylic ester + H2O = an alcohol + a carboxylate + H(+). Exhibits ester hydrolase activity with a strong preference for long-chain alkyl ester substrates and high selectivity against a variety of short, branched, and substituted esters. Is able to hydrolyze ester bonds within a wide range of p-nitrophenyl derivatives (C2-C14) in vitro, with a strong preference toward substrates of &gt;8 carbons. In Danio rerio (Zebrafish), this protein is Esterase OVCA2 (ovca2).